Consider the following 179-residue polypeptide: Large ribosomal subunit protein uL6 (179 aa).

This sequence belongs to the universal ribosomal protein uL6 family. Part of the 50S ribosomal subunit.

Functionally, this protein binds to the 23S rRNA, and is important in its secondary structure. It is located near the subunit interface in the base of the L7/L12 stalk, and near the tRNA binding site of the peptidyltransferase center. This chain is Large ribosomal subunit protein uL6, found in Rhodococcus jostii (strain RHA1).